The chain runs to 218 residues: Variable small protein 8 (218 aa).

The N-terminal stretch at 1–18 (MRKRISAIIMTLFMVFMS) is a signal peptide. Cysteine 19 is lipidated: N-palmitoyl cysteine. Cysteine 19 carries the S-diacylglycerol cysteine lipid modification.

The protein belongs to the variable small protein (Vsp) family.

Its subcellular location is the cell outer membrane. In terms of biological role, the Vlp and Vsp proteins are antigenically distinct proteins, only one vlp or vsp gene is transcriptionally active at any one time. Switching between these genes is a mechanism of host immune response evasion. The polypeptide is Variable small protein 8 (Borrelia hermsii).